Consider the following 71-residue polypeptide: uncharacterized protein (71 aa).

This is an uncharacterized protein from Autographa californica nuclear polyhedrosis virus (AcMNPV).